The following is a 979-amino-acid chain: Chromosome partition protein Smc (979 aa).

33-40 (PNGSGKSN) contacts ATP. A coiled-coil region spans residues 169-400 (SKYKLDKEEA…INILKQQFEN (232 aa)). Positions 419-538 (DGYIGLASEL…DNVDNANRIA (120 aa)) constitute an SMC hinge domain. 2 coiled-coil regions span residues 572-716 (ILNY…HSDS) and 750-818 (SLDL…DKII).

Belongs to the SMC family. In terms of assembly, homodimer.

Its subcellular location is the cytoplasm. In terms of biological role, required for chromosome condensation and partitioning. The chain is Chromosome partition protein Smc from Mesomycoplasma hyorhinis (Mycoplasma hyorhinis).